The chain runs to 448 residues: Methylenetetrahydrofolate--tRNA-(uracil-5-)-methyltransferase TrmFO (448 aa).

13–18 (GAGLAG) is an FAD binding site.

It belongs to the MnmG family. TrmFO subfamily. Requires FAD as cofactor.

Its subcellular location is the cytoplasm. It carries out the reaction uridine(54) in tRNA + (6R)-5,10-methylene-5,6,7,8-tetrahydrofolate + NADH + H(+) = 5-methyluridine(54) in tRNA + (6S)-5,6,7,8-tetrahydrofolate + NAD(+). The catalysed reaction is uridine(54) in tRNA + (6R)-5,10-methylene-5,6,7,8-tetrahydrofolate + NADPH + H(+) = 5-methyluridine(54) in tRNA + (6S)-5,6,7,8-tetrahydrofolate + NADP(+). Its function is as follows. Catalyzes the folate-dependent formation of 5-methyl-uridine at position 54 (M-5-U54) in all tRNAs. The protein is Methylenetetrahydrofolate--tRNA-(uracil-5-)-methyltransferase TrmFO of Streptococcus pyogenes serotype M12 (strain MGAS2096).